Reading from the N-terminus, the 404-residue chain is Cysteine desulfurase IscS (404 aa).

Residues 75–76, asparagine 155, glutamine 183, and 203–205 contribute to the pyridoxal 5'-phosphate site; these read AT and SGH. Lysine 206 is modified (N6-(pyridoxal phosphate)lysine). Residue threonine 243 coordinates pyridoxal 5'-phosphate. Residue cysteine 328 is the Cysteine persulfide intermediate of the active site. Cysteine 328 contributes to the [2Fe-2S] cluster binding site.

The protein belongs to the class-V pyridoxal-phosphate-dependent aminotransferase family. NifS/IscS subfamily. As to quaternary structure, homodimer. Forms a heterotetramer with IscU, interacts with other sulfur acceptors. It depends on pyridoxal 5'-phosphate as a cofactor.

Its subcellular location is the cytoplasm. The catalysed reaction is (sulfur carrier)-H + L-cysteine = (sulfur carrier)-SH + L-alanine. Its pathway is cofactor biosynthesis; iron-sulfur cluster biosynthesis. Functionally, master enzyme that delivers sulfur to a number of partners involved in Fe-S cluster assembly, tRNA modification or cofactor biosynthesis. Catalyzes the removal of elemental sulfur and selenium atoms from cysteine and selenocysteine to produce alanine. Functions as a sulfur delivery protein for Fe-S cluster synthesis onto IscU, an Fe-S scaffold assembly protein, as well as other S acceptor proteins. Also functions as a selenium delivery protein in the pathway for the biosynthesis of selenophosphate. This Salmonella paratyphi C (strain RKS4594) protein is Cysteine desulfurase IscS.